Reading from the N-terminus, the 214-residue chain is Threonylcarbamoyl-AMP synthase (214 aa).

Positions T9–R214 constitute a YrdC-like domain.

This sequence belongs to the SUA5 family. TsaC subfamily.

The protein resides in the cytoplasm. It carries out the reaction L-threonine + hydrogencarbonate + ATP = L-threonylcarbamoyladenylate + diphosphate + H2O. In terms of biological role, required for the formation of a threonylcarbamoyl group on adenosine at position 37 (t(6)A37) in tRNAs that read codons beginning with adenine. Catalyzes the conversion of L-threonine, HCO(3)(-)/CO(2) and ATP to give threonylcarbamoyl-AMP (TC-AMP) as the acyladenylate intermediate, with the release of diphosphate. The sequence is that of Threonylcarbamoyl-AMP synthase from Psychrobacter cryohalolentis (strain ATCC BAA-1226 / DSM 17306 / VKM B-2378 / K5).